The following is a 255-amino-acid chain: Pimeloyl-[acyl-carrier protein] methyl ester esterase (255 aa).

Residues 16-242 (LVLLHGWGLN…AAHAPFISHP (227 aa)) form the AB hydrolase-1 domain. Substrate is bound by residues Trp-22, 82–83 (SL), and 143–147 (FLALQ). Ser-82 acts as the Nucleophile in catalysis. Residues Asp-207 and His-235 contribute to the active site. Substrate is bound at residue His-235.

It belongs to the AB hydrolase superfamily. Carboxylesterase BioH family. As to quaternary structure, monomer.

The protein localises to the cytoplasm. The catalysed reaction is 6-carboxyhexanoyl-[ACP] methyl ester + H2O = 6-carboxyhexanoyl-[ACP] + methanol + H(+). It participates in cofactor biosynthesis; biotin biosynthesis. Functionally, the physiological role of BioH is to remove the methyl group introduced by BioC when the pimeloyl moiety is complete. It allows to synthesize pimeloyl-ACP via the fatty acid synthetic pathway through the hydrolysis of the ester bonds of pimeloyl-ACP esters. This Pectobacterium carotovorum subsp. carotovorum (strain PC1) protein is Pimeloyl-[acyl-carrier protein] methyl ester esterase.